The following is a 166-amino-acid chain: Phospholipase A2 inhibitor (166 aa).

An N-terminal signal peptide occupies residues 1-19; sequence MRLILLSGLLLLGIFLANG. A C-type lectin domain is found at 46 to 161; that stretch reads LRGAFLTVYK…CDDNLLVVCE (116 aa). 2 N-linked (GlcNAc...) asparagine glycosylation sites follow: N61 and N122. Intrachain disulfides connect C83-C160 and C138-C152.

The protein belongs to the alpha-type phospholipase A2 inhibitor family. In terms of assembly, homotrimer; non-covalently linked. As to expression, expressed by the liver.

Its subcellular location is the secreted. In terms of biological role, this phospholipase A2 inhibitor binds directly phospholipase A2 in the presence or absence of calcium. This Bothrops alternatus (Urutu) protein is Phospholipase A2 inhibitor.